The sequence spans 869 residues: TATA box-binding protein-associated factor RNA polymerase I subunit C (869 aa).

Disordered regions lie at residues 605-629 (SSLRRDAGPPGDTQPDCHAPTASWT) and 729-869 (GAAW…RMGF). Threonine 834 carries the phosphothreonine modification. Residues 835-860 (PPHSQASSVRATRSQQHTPVLSSSQP) show a composition bias toward polar residues. Position 848 is a phosphoserine (serine 848).

As to quaternary structure, component of the transcription factor SL1/TIF-IB complex, composed of TBP and at least TAF1A, TAF1B, TAF1C and TAF1D. In the complex interacts directly with TBP, TAF1A and TAF1B. Interaction of the SL1/TIF-IB subunits with TBP excludes interaction of TBP with the transcription factor IID (TFIID) subunits. Interacts with MYC and RRN3. Interacts with p53/TP53; the interaction prevents the association of SL1/TIF-IB with UBTF and represses RNA polymerase I transcription. Part of Pol I pre-initiation complex (PIC), in which Pol I core assembles with RRN3 and promoter-bound UTBF and SL1/TIF-IB complex.

It localises to the nucleus. Its subcellular location is the nucleolus. Functionally, component of the transcription factor SL1/TIF-IB complex, which is involved in the assembly of the PIC (pre-initiation complex) during RNA polymerase I-dependent transcription. The rate of PIC formation probably is primarily dependent on the rate of association of SL1/TIF-IB with the rDNA promoter. SL1/TIF-IB is involved in stabilization of nucleolar transcription factor 1/UBTF on rDNA. Formation of SL1/TIF-IB excludes the association of TBP with TFIID subunits. Recruits RNA polymerase I to the rRNA gene promoter via interaction with RRN3. This Homo sapiens (Human) protein is TATA box-binding protein-associated factor RNA polymerase I subunit C (TAF1C).